Here is a 120-residue protein sequence, read N- to C-terminus: Immunoglobulin kappa variable 2D-28 (120 aa).

An N-terminal signal peptide occupies residues 1-19 (MRLPAQLLGLLMLWVSGSS). The Ig-like domain maps to 20–120 (GDIVMTQSPL…YYCMQALQTP (101 aa)). The tract at residues 21–43 (DIVMTQSPLSLPVTPGEPASISC) is framework-1. Cys43 and Cys113 are oxidised to a cystine. Positions 44-59 (RSSQSLLHSNGYNYLD) are complementarity-determining-1. Residues 60–74 (WYLQKPGQSPQLLIY) are framework-2. The segment at 75-81 (LGSNRAS) is complementarity-determining-2. Positions 82 to 113 (GVPDRFSGSGSGTDFTLKISRVEAEDVGVYYC) are framework-3. A complementarity-determining-3 region spans residues 114–120 (MQALQTP).

In terms of assembly, immunoglobulins are composed of two identical heavy chains and two identical light chains; disulfide-linked.

It is found in the secreted. The protein localises to the cell membrane. Its function is as follows. V region of the variable domain of immunoglobulin light chains that participates in the antigen recognition. Immunoglobulins, also known as antibodies, are membrane-bound or secreted glycoproteins produced by B lymphocytes. In the recognition phase of humoral immunity, the membrane-bound immunoglobulins serve as receptors which, upon binding of a specific antigen, trigger the clonal expansion and differentiation of B lymphocytes into immunoglobulins-secreting plasma cells. Secreted immunoglobulins mediate the effector phase of humoral immunity, which results in the elimination of bound antigens. The antigen binding site is formed by the variable domain of one heavy chain, together with that of its associated light chain. Thus, each immunoglobulin has two antigen binding sites with remarkable affinity for a particular antigen. The variable domains are assembled by a process called V-(D)-J rearrangement and can then be subjected to somatic hypermutations which, after exposure to antigen and selection, allow affinity maturation for a particular antigen. This chain is Immunoglobulin kappa variable 2D-28, found in Homo sapiens (Human).